The chain runs to 160 residues: F-box protein At1g15015 (160 aa).

Residues 1-44 (MDVTLPHHVVEDILERLPVKTLRKFKCVCSTWRSTIDSQRFKDR) form the F-box domain.

The polypeptide is F-box protein At1g15015 (Arabidopsis thaliana (Mouse-ear cress)).